A 229-amino-acid chain; its full sequence is Small ribosomal subunit protein uS3 (229 aa).

Residues 39–107 (VRQYLTEKLK…TAQINIAEIR (69 aa)) form the KH type-2 domain.

It belongs to the universal ribosomal protein uS3 family. Part of the 30S ribosomal subunit. Forms a tight complex with proteins S10 and S14.

Its function is as follows. Binds the lower part of the 30S subunit head. Binds mRNA in the 70S ribosome, positioning it for translation. The protein is Small ribosomal subunit protein uS3 of Shewanella denitrificans (strain OS217 / ATCC BAA-1090 / DSM 15013).